A 1129-amino-acid polypeptide reads, in one-letter code: DNA-directed RNA polymerase I subunit RPA2 (1129 aa).

The C4-type zinc finger occupies 1061-1093 (CHKCGSILAPLQRIVKRNETGGLSSQPDTCRLC).

This sequence belongs to the RNA polymerase beta chain family. Component of the RNA polymerase I (Pol I) complex consisting of at least 13 subunits.

The protein localises to the nucleus. Its subcellular location is the nucleolus. The catalysed reaction is RNA(n) + a ribonucleoside 5'-triphosphate = RNA(n+1) + diphosphate. Functionally, DNA-dependent RNA polymerase catalyzes the transcription of DNA into RNA using the four ribonucleoside triphosphates as substrates. Second largest core component of RNA polymerase I which synthesizes ribosomal RNA precursors. Proposed to contribute to the polymerase catalytic activity and forms the polymerase active center together with the largest subunit. Pol I is composed of mobile elements and RPA2 is part of the core element with the central large cleft and probably a clamp element that moves to open and close the cleft. The polypeptide is DNA-directed RNA polymerase I subunit RPA2 (Drosophila melanogaster (Fruit fly)).